A 287-amino-acid polypeptide reads, in one-letter code: Bifunctional protein FolD (287 aa).

NADP(+) contacts are provided by residues 165–167 (NRS), serine 190, and isoleucine 233.

Belongs to the tetrahydrofolate dehydrogenase/cyclohydrolase family. Homodimer.

It carries out the reaction (6R)-5,10-methylene-5,6,7,8-tetrahydrofolate + NADP(+) = (6R)-5,10-methenyltetrahydrofolate + NADPH. The enzyme catalyses (6R)-5,10-methenyltetrahydrofolate + H2O = (6R)-10-formyltetrahydrofolate + H(+). It functions in the pathway one-carbon metabolism; tetrahydrofolate interconversion. Functionally, catalyzes the oxidation of 5,10-methylenetetrahydrofolate to 5,10-methenyltetrahydrofolate and then the hydrolysis of 5,10-methenyltetrahydrofolate to 10-formyltetrahydrofolate. This Nitrosopumilus maritimus (strain SCM1) protein is Bifunctional protein FolD.